Reading from the N-terminus, the 128-residue chain is Small ribosomal subunit protein uS11 (128 aa).

Belongs to the universal ribosomal protein uS11 family. Part of the 30S ribosomal subunit. Interacts with proteins S7 and S18. Binds to IF-3.

In terms of biological role, located on the platform of the 30S subunit, it bridges several disparate RNA helices of the 16S rRNA. Forms part of the Shine-Dalgarno cleft in the 70S ribosome. The protein is Small ribosomal subunit protein uS11 of Wolbachia sp. subsp. Drosophila simulans (strain wRi).